The following is a 256-amino-acid chain: Low molecular mass lipoprotein PBMHP-6 (256 aa).

Positions 1 to 19 (MRLTLFAFVLAVCALASNA) are cleaved as a signal peptide.

This sequence belongs to the 30 kDa lipoprotein family.

It is found in the secreted. The chain is Low molecular mass lipoprotein PBMHP-6 from Bombyx mori (Silk moth).